The following is a 377-amino-acid chain: 2-iminoacetate synthase (377 aa).

The Radical SAM core domain occupies 71–301 (NTVSFYVPLY…PEIELSLSTR (231 aa)). [4Fe-4S] cluster is bound by residues cysteine 85, cysteine 89, and cysteine 92.

The protein belongs to the radical SAM superfamily. ThiH family. As to quaternary structure, forms a heterodimer with ThiG. [4Fe-4S] cluster is required as a cofactor.

The enzyme catalyses L-tyrosine + S-adenosyl-L-methionine + NADPH = 2-iminoacetate + 4-methylphenol + 5'-deoxyadenosine + L-methionine + NADP(+). Its pathway is cofactor biosynthesis; thiamine diphosphate biosynthesis. Its function is as follows. Catalyzes the radical-mediated cleavage of tyrosine to 2-iminoacetate and 4-cresol. In Salmonella typhimurium (strain LT2 / SGSC1412 / ATCC 700720), this protein is 2-iminoacetate synthase (thiH).